Here is a 260-residue protein sequence, read N- to C-terminus: Thiazole synthase (260 aa).

Residue Lys96 is the Schiff-base intermediate with DXP of the active site. Residues Gly157, 184 to 185, and 206 to 207 each bind 1-deoxy-D-xylulose 5-phosphate; these read AG and NT.

It belongs to the ThiG family. Homotetramer. Forms heterodimers with either ThiH or ThiS.

The protein resides in the cytoplasm. It carries out the reaction [ThiS sulfur-carrier protein]-C-terminal-Gly-aminoethanethioate + 2-iminoacetate + 1-deoxy-D-xylulose 5-phosphate = [ThiS sulfur-carrier protein]-C-terminal Gly-Gly + 2-[(2R,5Z)-2-carboxy-4-methylthiazol-5(2H)-ylidene]ethyl phosphate + 2 H2O + H(+). Its pathway is cofactor biosynthesis; thiamine diphosphate biosynthesis. Catalyzes the rearrangement of 1-deoxy-D-xylulose 5-phosphate (DXP) to produce the thiazole phosphate moiety of thiamine. Sulfur is provided by the thiocarboxylate moiety of the carrier protein ThiS. In vitro, sulfur can be provided by H(2)S. The polypeptide is Thiazole synthase (Nitrobacter hamburgensis (strain DSM 10229 / NCIMB 13809 / X14)).